Consider the following 208-residue polypeptide: Sodium/potassium-transporting ATPase subunit beta-1-interacting protein 2 (208 aa).

The next 4 membrane-spanning stretches (helical) occupy residues 1-23 (MGYC…CVLE), 35-55 (APIL…FGTI), 62-82 (ITGY…VICF), and 153-173 (LQIV…KCIT).

This sequence belongs to the NKAIN family. Interacts with ATP1B1. Expressed in fetal brain. Weakly expressed in adult brain and thymus. Not expressed in any other normal tissue examined.

It is found in the cell membrane. The chain is Sodium/potassium-transporting ATPase subunit beta-1-interacting protein 2 (NKAIN2) from Homo sapiens (Human).